Here is a 190-residue protein sequence, read N- to C-terminus: Elongation factor P-like protein (190 aa).

Belongs to the elongation factor P family.

In Photorhabdus laumondii subsp. laumondii (strain DSM 15139 / CIP 105565 / TT01) (Photorhabdus luminescens subsp. laumondii), this protein is Elongation factor P-like protein.